An 809-amino-acid chain; its full sequence is MSTPAESSDSKSKKDFSTAILERKKSPNRLVVDEAINDDNSVVSLHPATMEKLQLFRGDTILIKGKKRKDTVCIALADETCEEPKIRMNKVVRSNLRVRLGDVISVHQCPDVKYGKRVHILPVDDTVEGVTGNLFDAYLKPYFLEAYRPVRKGDLFLVRGGMRSVEFKVIETDPAEYCVVAPDTEIFCEGEPVKREDEERLDDVGYDDVGGVRKQMAQIRELVELPLRHPQLFKSIGVKPPKGILLYGPPGSGKTLIARAVANETGAFFFCINGPEIMSKLAGESESNLRKAFEEAEKNAPSIIFIDEIDSIAPKREKTNGEVERRIVSQLLTLMDGLKSRAHVIVMGATNRPNSIDPALRRFGRFDREIDIGVPDEIGRLEVLRIHTKNMKLAEDVDLERISKDTHGYVGADLAALCTEAALQCIREKMDVIDLEDDSIDAEILNSMAVTNEHFHTALGNSNPSALRETVVEVPNVSWNDIGGLENVKRELQETVQYPVEHPEKFEKFGMSPSKGVLFYGPPGCGKTLLAKAIANECQANFISVKGPELLTMWFGESEANVREIFDKARQSAPCVLFFDELDSIATQRGGGSGGDGGGAADRVLNQLLTEMDGMNAKKTVFIIGATNRPDIIDSALLRPGRLDQLIYIPLPDEDSRLNIFKAALRKSPIAKDVDIGALAKYTQGFSGADITEICQRACKYAIRENIEKDIEKEKRRSENPEAMEEDGVDEVSEIKAAHFEESMKYARRSVSDADIRKYQAFAQTLQQSRGFGSEFRFENSAGSGATTGVADPFATSAAAAGDDDDLYN.

Serine 2 is subject to N-acetylserine. At serine 41 the chain carries Phosphoserine. Residues glycine 210, glycine 248–leucine 256, and histidine 387 each bind ADP. Glycine 521–leucine 529 lines the ATP pocket. Positions alanine 782–asparagine 809 are disordered. Low complexity predominate over residues alanine 791–alanine 801.

The protein belongs to the AAA ATPase family. As to quaternary structure, homohexamer. Interacts with SERK1, GRF6, KAPP and SYP31, but not with KNOLLE. Component of the SERK1 signaling complex, composed of KAPP, CDC48A, GRF6 or GRF7, SERK1, SERK2, SERK3/BAK1 and BRI1. Interacts with PUX1, PUX2, PUX3, PUX4, PUX5, PUX7 and PUX11 via its N-terminus. Post-translationally, phosphorylated on at least one threonine residue and on Ser-41 by SERK1.

The protein resides in the nucleus. Its subcellular location is the cytoplasm. It localises to the cytoskeleton. The protein localises to the phragmoplast. It is found in the cell membrane. In terms of biological role, probably functions in cell division and growth processes. Interacts with certain SNAREs as part of specialized membrane fusion events where vesicles from the same organelle fuse (homotypic fusion). This Arabidopsis thaliana (Mouse-ear cress) protein is Cell division control protein 48 homolog A (CDC48A).